Here is a 60-residue protein sequence, read N- to C-terminus: Large ribosomal subunit protein bL32 (60 aa).

Residues 1–16 (MAVPRRKTSPSRRGMR) show a composition bias toward basic residues. The interval 1 to 60 (MAVPRRKTSPSRRGMRRSADAIKKPTYVEDKDSGELRRPHHLDLKTGMYKGRQVLKKKDA) is disordered. Residues 17-44 (RSADAIKKPTYVEDKDSGELRRPHHLDL) show a composition bias toward basic and acidic residues.

This sequence belongs to the bacterial ribosomal protein bL32 family.

In Bradyrhizobium sp. (strain BTAi1 / ATCC BAA-1182), this protein is Large ribosomal subunit protein bL32.